Reading from the N-terminus, the 306-residue chain is tRNA dimethylallyltransferase (306 aa).

11–18 (GPTAVGKS) is an ATP binding site. 13 to 18 (TAVGKS) contributes to the substrate binding site. Residues 35 to 38 (DSIQ) form an interaction with substrate tRNA region.

It belongs to the IPP transferase family. In terms of assembly, monomer. Mg(2+) serves as cofactor.

It catalyses the reaction adenosine(37) in tRNA + dimethylallyl diphosphate = N(6)-dimethylallyladenosine(37) in tRNA + diphosphate. Functionally, catalyzes the transfer of a dimethylallyl group onto the adenine at position 37 in tRNAs that read codons beginning with uridine, leading to the formation of N6-(dimethylallyl)adenosine (i(6)A). The chain is tRNA dimethylallyltransferase from Borreliella burgdorferi (strain ATCC 35210 / DSM 4680 / CIP 102532 / B31) (Borrelia burgdorferi).